A 363-amino-acid chain; its full sequence is Peroxisomal (S)-2-hydroxyacid oxidase GLO4 (363 aa).

One can recognise an FMN hydroxy acid dehydrogenase domain in the interval 1 to 357; the sequence is MDQIVNVDEF…TRNHVRTENE (357 aa). FMN-binding positions include 78-80, Ser-107, 128-130, and Thr-156; these read PTA and QIY. An a 2-oxocarboxylate-binding site is contributed by Tyr-130. Arg-165 serves as a coordination point for a 2-oxocarboxylate. FMN contacts are provided by Lys-228 and Ser-250. His-252 acts as the Proton acceptor in catalysis. Arg-255 contributes to the a 2-oxocarboxylate binding site. FMN contacts are provided by residues 283 to 287 and 306 to 307; these read DGGVR and GR. The short motif at 361–363 is the Microbody targeting signal element; it reads SML.

Belongs to the FMN-dependent alpha-hydroxy acid dehydrogenase family. As to quaternary structure, homotetramer. FMN serves as cofactor.

It is found in the peroxisome. The catalysed reaction is a (2S)-2-hydroxycarboxylate + O2 = a 2-oxocarboxylate + H2O2. It carries out the reaction 2-hydroxydodecanoate + O2 = 2-oxododecanoate + H2O2. It catalyses the reaction 2-hydroxyhexanoate + O2 = 2-oxohexanoate + H2O2. The enzyme catalyses 2-hydroxyoctanoate + O2 = 2-oxooctanoate + H2O2. The catalysed reaction is (S)-lactate + O2 = pyruvate + H2O2. Its pathway is lipid metabolism; fatty acid metabolism. In terms of biological role, oxidase that catalyzes the oxidation of a broad range of 2-hydroxyacids to the corresponding 2-oxoacids, with a reduction of O2 to H2O2. Displays the highest activity with the long-chain fatty acid 2-hydroxydodecanoate and has intermediate activity with 2-hydroxyhexanoate, 2-hydroxyoctanote, and the short-chain hydroxyacid (S)-lactate (L-lactate). With much lower activity, it can also use glycolate, leucic acid, valic acid, and isoleucic acid as substrates in vitro. Cannot use 2-hydroxyhexadecanoate or D-lactate as substrates. May be involved in a general medium- and long-chain fatty acid catabolic pathway such as alpha-oxidation. This is Peroxisomal (S)-2-hydroxyacid oxidase GLO4 (GLO4) from Arabidopsis thaliana (Mouse-ear cress).